The sequence spans 290 residues: 4-diphosphocytidyl-2-C-methyl-D-erythritol kinase (290 aa).

Residue lysine 20 is part of the active site. Position 104–114 (104–114) interacts with ATP; it reads PMGGGLGGGSS. Residue aspartate 146 is part of the active site.

Belongs to the GHMP kinase family. IspE subfamily.

It carries out the reaction 4-CDP-2-C-methyl-D-erythritol + ATP = 4-CDP-2-C-methyl-D-erythritol 2-phosphate + ADP + H(+). It functions in the pathway isoprenoid biosynthesis; isopentenyl diphosphate biosynthesis via DXP pathway; isopentenyl diphosphate from 1-deoxy-D-xylulose 5-phosphate: step 3/6. Functionally, catalyzes the phosphorylation of the position 2 hydroxy group of 4-diphosphocytidyl-2C-methyl-D-erythritol. The protein is 4-diphosphocytidyl-2-C-methyl-D-erythritol kinase of Shewanella frigidimarina (strain NCIMB 400).